The following is a 476-amino-acid chain: Cysteine--tRNA ligase (476 aa).

Residue cysteine 28 participates in Zn(2+) binding. A 'HIGH' region motif is present at residues 30–40; it reads PTVYDNTHLGH. Cysteine 208, histidine 233, and glutamate 237 together coordinate Zn(2+). The short motif at 265–269 is the 'KMSKS' region element; it reads KMSKS. Residue lysine 268 coordinates ATP.

The protein belongs to the class-I aminoacyl-tRNA synthetase family. Zn(2+) is required as a cofactor.

The protein resides in the cytoplasm. The enzyme catalyses tRNA(Cys) + L-cysteine + ATP = L-cysteinyl-tRNA(Cys) + AMP + diphosphate. This Methanococcus maripaludis (strain DSM 14266 / JCM 13030 / NBRC 101832 / S2 / LL) protein is Cysteine--tRNA ligase.